Reading from the N-terminus, the 655-residue chain is Ubiquilin-3 (655 aa).

In terms of domain architecture, Ubiquitin-like spans 22 to 98; that stretch reads IKVTVKTPKD…LVIKRQHRAM (77 aa). The tract at residues 102–124 is disordered; sequence CPAASVPTQGPSPGSLPQPSSIY. The span at 110 to 122 shows a compositional bias: low complexity; the sequence is QGPSPGSLPQPSS. An STI1 domain is found at 194–233; the sequence is NPHMQQLIQHNPEIGHILNNPEIMRQTLEFLRNPAMMQEM. Disordered regions lie at residues 277–330, 364–399, and 412–447; these read PFAT…PDIR, ASAL…LPEE, and FLRY…LVSG. A compositionally biased stretch (low complexity) spans 279–290; that stretch reads ATATTDNATTTT. Positions 318–330 are enriched in basic and acidic residues; it reads GRQDGDQDAPDIR. Residues 377 to 395 show a composition bias toward low complexity; the sequence is VNRVPPSSPSSQEPGSGQP. A compositionally biased stretch (polar residues) spans 432-441; that stretch reads KSSTGHSTNL. The UBA domain maps to 609-655; sequence QLQPEAHFQVQLEQLRSMGFLNREANLQALIATGGDVDAAVEKLRQS.

In terms of tissue distribution, testis specific.

This Homo sapiens (Human) protein is Ubiquilin-3 (UBQLN3).